Reading from the N-terminus, the 602-residue chain is 3-hydroxy-3-methylglutaryl-coenzyme A reductase 2 (602 aa).

2 consecutive transmembrane segments (helical) span residues 44-67 (ASDA…FFSV) and 95-115 (AIVS…IGFV). The interval 116 to 187 (QTFVSRGNND…PLITSASSGE (72 aa)) is linker. An N-linked (GlcNAc...) asparagine glycan is attached at N124. The segment at 188 to 602 (DEEIIKSVVQ…STKDVTKASS (415 aa)) is catalytic. E281 acts as the Charge relay system in catalysis. A glycan (N-linked (GlcNAc...) asparagine) is linked at N345. K413 acts as the Charge relay system in catalysis. Residue N458 is glycosylated (N-linked (GlcNAc...) asparagine). The active-site Charge relay system is D489. H587 serves as the catalytic Proton donor. N591 carries N-linked (GlcNAc...) asparagine glycosylation.

Belongs to the HMG-CoA reductase family.

The protein resides in the endoplasmic reticulum membrane. The catalysed reaction is (R)-mevalonate + 2 NADP(+) + CoA = (3S)-3-hydroxy-3-methylglutaryl-CoA + 2 NADPH + 2 H(+). Its pathway is metabolic intermediate biosynthesis; (R)-mevalonate biosynthesis; (R)-mevalonate from acetyl-CoA: step 3/3. In terms of biological role, catalyzes the synthesis of mevalonate. The specific precursor of all isoprenoid compounds present in plants. This chain is 3-hydroxy-3-methylglutaryl-coenzyme A reductase 2 (HMG2), found in Solanum lycopersicum (Tomato).